The sequence spans 24 residues: Protein YahV (24 aa).

The helical transmembrane segment at 4–24 (ILLNVLNIVFIGIAIILVIIC) threads the bilayer.

The protein localises to the cell inner membrane. The sequence is that of Protein YahV from Escherichia coli (strain K12).